Reading from the N-terminus, the 75-residue chain is DNA-directed RNA polymerase subunit Rpo5 (75 aa).

Belongs to the archaeal Rpo5/eukaryotic RPB5 RNA polymerase subunit family. Part of the RNA polymerase complex.

It localises to the cytoplasm. It carries out the reaction RNA(n) + a ribonucleoside 5'-triphosphate = RNA(n+1) + diphosphate. Functionally, DNA-dependent RNA polymerase (RNAP) catalyzes the transcription of DNA into RNA using the four ribonucleoside triphosphates as substrates. The sequence is that of DNA-directed RNA polymerase subunit Rpo5 from Halobacterium salinarum (strain ATCC 700922 / JCM 11081 / NRC-1) (Halobacterium halobium).